Reading from the N-terminus, the 91-residue chain is MNKNIIFSFTVLTLFVIFVQVTGVIGNLQQRRQMNQTWCSRPLLTHKQTGKCVIEDCESKCRQKWKGNGTQATCRNQCNCHFRCPWIQGQP.

Positions 1 to 26 (MNKNIIFSFTVLTLFVIFVQVTGVIG) are cleaved as a signal peptide. Residues Asn35 and Asn68 are each glycosylated (N-linked (GlcNAc...) asparagine). 4 disulfide bridges follow: Cys39-Cys84, Cys52-Cys74, Cys57-Cys78, and Cys61-Cys80.

The protein belongs to the DEFL family.

It is found in the secreted. The polypeptide is Putative defensin-like protein 145 (LCR2) (Arabidopsis thaliana (Mouse-ear cress)).